The primary structure comprises 429 residues: Gamma-glutamyl phosphate reductase (429 aa).

The protein belongs to the gamma-glutamyl phosphate reductase family.

It localises to the cytoplasm. The enzyme catalyses L-glutamate 5-semialdehyde + phosphate + NADP(+) = L-glutamyl 5-phosphate + NADPH + H(+). It functions in the pathway amino-acid biosynthesis; L-proline biosynthesis; L-glutamate 5-semialdehyde from L-glutamate: step 2/2. Its function is as follows. Catalyzes the NADPH-dependent reduction of L-glutamate 5-phosphate into L-glutamate 5-semialdehyde and phosphate. The product spontaneously undergoes cyclization to form 1-pyrroline-5-carboxylate. The protein is Gamma-glutamyl phosphate reductase of Sphingopyxis alaskensis (strain DSM 13593 / LMG 18877 / RB2256) (Sphingomonas alaskensis).